The sequence spans 274 residues: Tropomyosin (274 aa).

A compositionally biased stretch (basic and acidic residues) spans 1–35 (MKLEKDNAMDRADTLEQQNKEANNRAEKSEEEVHN). Residues 1-45 (MKLEKDNAMDRADTLEQQNKEANNRAEKSEEEVHNLQKRMQQLEN) form a disordered region. Residues 1–274 (MKLEKDNAMD…DQTFSELSGY (274 aa)) are a coiled coil.

The protein belongs to the tropomyosin family. As to quaternary structure, homodimer.

Tropomyosin, in association with the troponin complex, plays a central role in the calcium dependent regulation of muscle contraction. The sequence is that of Tropomyosin from Metapenaeus ensis (Greasyback shrimp).